We begin with the raw amino-acid sequence, 373 residues long: Tyrosyl-DNA phosphodiesterase 2 (373 aa).

Positions 131–135 are interaction with 5' end of substrate DNA; sequence NIDGL. Mg(2+) contacts are provided by aspartate 133 and glutamate 163. Residues 237–242 form an interaction with 5' end of substrate DNA region; it reads HLESTK. The Proton donor/acceptor role is filled by aspartate 273. An interaction with 5' end of substrate DNA region spans residues 275-277; it reads NLR.

The protein belongs to the CCR4/nocturin family. TTRAP/TDP2 subfamily. The cofactor is Mg(2+). Mn(2+) serves as cofactor.

It localises to the nucleus. Its subcellular location is the PML body. Functionally, DNA repair enzyme that can remove a variety of covalent adducts from DNA through hydrolysis of a 5'-phosphodiester bond, giving rise to DNA with a free 5' phosphate. Catalyzes the hydrolysis of dead-end complexes between DNA and the topoisomerase 2 (top2) active site tyrosine residue. Hydrolyzes 5'-phosphoglycolates on protruding 5' ends on DNA double-strand breaks (DSBs) due to DNA damage by radiation and free radicals. The chain is Tyrosyl-DNA phosphodiesterase 2 (tdp2) from Xenopus tropicalis (Western clawed frog).